A 754-amino-acid chain; its full sequence is Cytosolic neutral trehalase (754 aa).

Residues M1–P10 show a composition bias toward polar residues. Disordered stretches follow at residues M1 to N47 and T54 to P73. Residues D117, D119, N121, Q123, and D128 each coordinate Ca(2+). Residues R305, W312–D313, N349, R358–Q360, E427, R476, and G479 contribute to the substrate site. Catalysis depends on proton donor/acceptor residues D481 and E676.

The protein belongs to the glycosyl hydrolase 37 family. It depends on Ca(2+) as a cofactor.

It localises to the cytoplasm. The catalysed reaction is alpha,alpha-trehalose + H2O = alpha-D-glucose + beta-D-glucose. The protein operates within carbohydrate degradation. Functionally, hydrolyzes intracellular trehalose to glucose. The disaccharide trehalose serves as a storage molecule for energy and carbohydrates that is mobilized during nutrient stress. This is Cytosolic neutral trehalase from Kluyveromyces lactis (strain ATCC 8585 / CBS 2359 / DSM 70799 / NBRC 1267 / NRRL Y-1140 / WM37) (Yeast).